The following is a 209-amino-acid chain: Elongation factor Ts, chloroplastic (209 aa).

The protein belongs to the EF-Ts family.

The protein localises to the plastid. It is found in the chloroplast. Associates with the EF-Tu.GDP complex and induces the exchange of GDP to GTP. It remains bound to the aminoacyl-tRNA.EF-Tu.GTP complex up to the GTP hydrolysis stage on the ribosome. In Cyanidioschyzon merolae (strain NIES-3377 / 10D) (Unicellular red alga), this protein is Elongation factor Ts, chloroplastic (tsf).